The following is a 258-amino-acid chain: UPF0246 protein ACIAD2218 (258 aa).

The protein belongs to the UPF0246 family.

In Acinetobacter baylyi (strain ATCC 33305 / BD413 / ADP1), this protein is UPF0246 protein ACIAD2218.